Reading from the N-terminus, the 560-residue chain is MADSKSGDTEVAHRSSDPSEKRGGWITLPFMLVTLLGMSITSFGWGMNLIVFLIEEFHIKNIAAAQISNVVNGVVNMLPVVAAILADSFFGNIPVISTSTFISLAGTSLLTLITSLNYLMPRPCETGSILCQSPSKLQLGILYVALALVIIGSAGTRFTLAAAGANQYKKPKEQGRFFNWFFLALYIGAITGTTAIVYTQDNASWKLGFGLCAVANLISFIVFIAGVRFYKHDKPLGSPYTSLIRVLVAATMKRKAVISSKDEDYHQYGLGKEAKTYTTMPSKSFRFLNRAALKNKEDLNTSGDSSNNMWRLCSVQEVEDFKAILRLVPLWAAVMFLSTPVAVQMSMTVLQALVMDRKLSPHFEVSAGSLQVIVLVFGCVFIMLNNWIIYPMYQKLIGKPLTPLQQVGIGHVFTILSMAISAVVEAKRLKTVENGGHPMSVLWLVPALVMVGIGEAFHFPANVAVFYGEFPESLKNTATSLTSVVIGISFYLSTAVIDVIQRTTSWLPNDINHGRVDNVYWVVVIGGVLNLGYFLVCSWFYKYRNLKDDDHEQDPKDVKT.

Residues 1 to 20 are disordered; sequence MADSKSGDTEVAHRSSDPSE. Transmembrane regions (helical) follow at residues 34-54, 77-97, 101-121, 141-161, 177-197, 207-227, 323-343, 372-392, 404-424, 441-461, 480-500, and 520-540; these read TLLG…VFLI, MLPV…PVIS, FISL…YLMP, ILYV…FTLA, FFNW…TAIV, LGFG…IAGV, AILR…PVAV, VIVL…IYPM, LQQV…SAVV, VLWL…HFPA, SLTS…IDVI, and YWVV…CSWF.

Belongs to the major facilitator superfamily. Proton-dependent oligopeptide transporter (POT/PTR) (TC 2.A.17) family. Expressed in the root epidermis or cortex.

The protein localises to the membrane. In terms of biological role, transporter involved in a passive nitrate efflux. This chain is Protein NRT1/ PTR FAMILY 2.5 (NPF2.5), found in Arabidopsis thaliana (Mouse-ear cress).